We begin with the raw amino-acid sequence, 184 residues long: Large ribosomal subunit protein uL5c (184 aa).

Belongs to the universal ribosomal protein uL5 family. As to quaternary structure, part of the 50S ribosomal subunit; contacts the 5S rRNA.

It localises to the plastid. The protein localises to the chloroplast. In terms of biological role, binds 5S rRNA, forms part of the central protuberance of the 50S subunit. This chain is Large ribosomal subunit protein uL5c (rpl5), found in Zygnema circumcarinatum (Green alga).